Consider the following 253-residue polypeptide: Imidazole glycerol phosphate synthase subunit HisF (253 aa).

Catalysis depends on residues D11 and D130.

The protein belongs to the HisA/HisF family. In terms of assembly, heterodimer of HisH and HisF.

The protein localises to the cytoplasm. The catalysed reaction is 5-[(5-phospho-1-deoxy-D-ribulos-1-ylimino)methylamino]-1-(5-phospho-beta-D-ribosyl)imidazole-4-carboxamide + L-glutamine = D-erythro-1-(imidazol-4-yl)glycerol 3-phosphate + 5-amino-1-(5-phospho-beta-D-ribosyl)imidazole-4-carboxamide + L-glutamate + H(+). The protein operates within amino-acid biosynthesis; L-histidine biosynthesis; L-histidine from 5-phospho-alpha-D-ribose 1-diphosphate: step 5/9. Functionally, IGPS catalyzes the conversion of PRFAR and glutamine to IGP, AICAR and glutamate. The HisF subunit catalyzes the cyclization activity that produces IGP and AICAR from PRFAR using the ammonia provided by the HisH subunit. The protein is Imidazole glycerol phosphate synthase subunit HisF of Caldanaerobacter subterraneus subsp. tengcongensis (strain DSM 15242 / JCM 11007 / NBRC 100824 / MB4) (Thermoanaerobacter tengcongensis).